The following is a 562-amino-acid chain: Catalase T (562 aa).

Catalysis depends on residues H64 and N137. Y351 contacts heme.

This sequence belongs to the catalase family. In terms of assembly, homotetramer. It depends on heme as a cofactor.

The protein localises to the cytoplasm. It carries out the reaction 2 H2O2 = O2 + 2 H2O. Functionally, occurs in almost all aerobically respiring organisms and serves to protect cells from the toxic effects of hydrogen peroxide. The sequence is that of Catalase T (CTT1) from Saccharomyces cerevisiae (strain ATCC 204508 / S288c) (Baker's yeast).